The sequence spans 374 residues: ORC1-type DNA replication protein 6 (374 aa).

ATP is bound by residues Thr66–Thr70, Tyr209, and Arg221.

It belongs to the CDC6/cdc18 family.

In terms of biological role, involved in regulation of DNA replication. The polypeptide is ORC1-type DNA replication protein 6 (orc6) (Halobacterium salinarum (strain ATCC 700922 / JCM 11081 / NRC-1) (Halobacterium halobium)).